Consider the following 369-residue polypeptide: 3-dehydroquinate synthase (369 aa).

NAD(+) is bound by residues 78 to 83, 112 to 116, 136 to 137, Lys149, Lys158, and 176 to 179; these read DGERYK, GVIGD, TT, and TLTT. The Zn(2+) site is built by Glu191, His254, and His271.

The protein belongs to the sugar phosphate cyclases superfamily. Dehydroquinate synthase family. It depends on NAD(+) as a cofactor. Co(2+) is required as a cofactor. Requires Zn(2+) as cofactor.

The protein localises to the cytoplasm. It carries out the reaction 7-phospho-2-dehydro-3-deoxy-D-arabino-heptonate = 3-dehydroquinate + phosphate. Its pathway is metabolic intermediate biosynthesis; chorismate biosynthesis; chorismate from D-erythrose 4-phosphate and phosphoenolpyruvate: step 2/7. Its function is as follows. Catalyzes the conversion of 3-deoxy-D-arabino-heptulosonate 7-phosphate (DAHP) to dehydroquinate (DHQ). This chain is 3-dehydroquinate synthase, found in Nitrosomonas europaea (strain ATCC 19718 / CIP 103999 / KCTC 2705 / NBRC 14298).